A 121-amino-acid chain; its full sequence is Ribonuclease P protein component (121 aa).

This sequence belongs to the RnpA family. As to quaternary structure, consists of a catalytic RNA component (M1 or rnpB) and a protein subunit.

It carries out the reaction Endonucleolytic cleavage of RNA, removing 5'-extranucleotides from tRNA precursor.. In terms of biological role, RNaseP catalyzes the removal of the 5'-leader sequence from pre-tRNA to produce the mature 5'-terminus. It can also cleave other RNA substrates such as 4.5S RNA. The protein component plays an auxiliary but essential role in vivo by binding to the 5'-leader sequence and broadening the substrate specificity of the ribozyme. This is Ribonuclease P protein component from Geobacillus kaustophilus (strain HTA426).